We begin with the raw amino-acid sequence, 517 residues long: Perilipin-1 (517 aa).

Ser81 carries the post-translational modification Phosphoserine. The residue at position 85 (Thr85) is a Phosphothreonine. 5 positions are modified to phosphoserine: Ser126, Ser130, Ser132, Ser137, and Ser174. Residues 195–216 (DKESAPSSGRQRTQKAPKAKPS) are disordered. Thr223, Thr298, and Thr300 each carry phosphothreonine. The segment at 286-320 (LAASQDESHDDQTDTEGEETDDEEEEEESEAEENV) is disordered. Positions 290-321 (QDESHDDQTDTEGEETDDEEEEEESEAEENVL) are required for interaction with CIDEC. Acidic residues predominate over residues 298-318 (TDTEGEETDDEEEEEESEAEE). 9 positions are modified to phosphoserine: Ser314, Ser384, Ser386, Ser410, Ser433, Ser439, Ser460, Ser492, and Ser494. Residues 425-490 (SAEAERKGSG…AMPREKPARR (66 aa)) are disordered.

This sequence belongs to the perilipin family. In terms of assembly, interacts with ABHD5. Interacts with CIDEC. Interacts with AQP7. Major cAMP-dependent protein kinase-substrate in adipocytes, also dephosphorylated by PP1. When phosphorylated, may be maximally sensitive to HSL and when unphosphorylated, may play a role in the inhibition of lipolysis, by acting as a barrier in lipid droplet.

The protein resides in the endoplasmic reticulum. Its subcellular location is the lipid droplet. In terms of biological role, modulator of adipocyte lipid metabolism. Coats lipid storage droplets to protect them from breakdown by hormone-sensitive lipase (HSL). Its absence may result in leanness. Plays a role in unilocular lipid droplet formation by activating CIDEC. Their interaction promotes lipid droplet enlargement and directional net neutral lipid transfer. May modulate lipolysis and triglyceride levels. This is Perilipin-1 (Plin1) from Mus musculus (Mouse).